The sequence spans 596 residues: Arginine--tRNA ligase (596 aa).

Residues 128–138 (ANPTSSLHVGH) carry the 'HIGH' region motif.

The protein belongs to the class-I aminoacyl-tRNA synthetase family. As to quaternary structure, monomer.

The protein resides in the cytoplasm. It catalyses the reaction tRNA(Arg) + L-arginine + ATP = L-arginyl-tRNA(Arg) + AMP + diphosphate. The chain is Arginine--tRNA ligase from Acinetobacter baumannii (strain AB307-0294).